The following is a 1397-amino-acid chain: DNA-directed RNA polymerase subunit beta' (1397 aa).

Residues cysteine 75, cysteine 77, cysteine 90, and cysteine 93 each coordinate Zn(2+). Mg(2+)-binding residues include aspartate 465, aspartate 467, and aspartate 469. The Zn(2+) site is built by cysteine 819, cysteine 893, cysteine 900, and cysteine 903.

This sequence belongs to the RNA polymerase beta' chain family. The RNAP catalytic core consists of 2 alpha, 1 beta, 1 beta' and 1 omega subunit. When a sigma factor is associated with the core the holoenzyme is formed, which can initiate transcription. Requires Mg(2+) as cofactor. Zn(2+) is required as a cofactor.

The enzyme catalyses RNA(n) + a ribonucleoside 5'-triphosphate = RNA(n+1) + diphosphate. Its function is as follows. DNA-dependent RNA polymerase catalyzes the transcription of DNA into RNA using the four ribonucleoside triphosphates as substrates. The polypeptide is DNA-directed RNA polymerase subunit beta' (Acinetobacter baylyi (strain ATCC 33305 / BD413 / ADP1)).